Reading from the N-terminus, the 179-residue chain is Large ribosomal subunit protein uL5 (179 aa).

Belongs to the universal ribosomal protein uL5 family. Part of the 50S ribosomal subunit; part of the 5S rRNA/L5/L18/L25 subcomplex. Contacts the 5S rRNA and the P site tRNA. Forms a bridge to the 30S subunit in the 70S ribosome.

This is one of the proteins that bind and probably mediate the attachment of the 5S RNA into the large ribosomal subunit, where it forms part of the central protuberance. In the 70S ribosome it contacts protein S13 of the 30S subunit (bridge B1b), connecting the 2 subunits; this bridge is implicated in subunit movement. Contacts the P site tRNA; the 5S rRNA and some of its associated proteins might help stabilize positioning of ribosome-bound tRNAs. This chain is Large ribosomal subunit protein uL5, found in Rickettsia felis (strain ATCC VR-1525 / URRWXCal2) (Rickettsia azadi).